The chain runs to 1101 residues: Error-prone DNA polymerase (1101 aa).

The segment at 1055–1101 is disordered; it reads ADLGHPMDSAVGQTTPQTDSAPRPRPQPRAMHPREQAKRLFPSRDFH. Positions 1065–1074 are enriched in polar residues; sequence VGQTTPQTDS. Residues 1086–1101 are compositionally biased toward basic and acidic residues; that stretch reads HPREQAKRLFPSRDFH.

It belongs to the DNA polymerase type-C family. DnaE2 subfamily.

The protein localises to the cytoplasm. It catalyses the reaction DNA(n) + a 2'-deoxyribonucleoside 5'-triphosphate = DNA(n+1) + diphosphate. DNA polymerase involved in damage-induced mutagenesis and translesion synthesis (TLS). It is not the major replicative DNA polymerase. This chain is Error-prone DNA polymerase, found in Ruegeria pomeroyi (strain ATCC 700808 / DSM 15171 / DSS-3) (Silicibacter pomeroyi).